Reading from the N-terminus, the 271-residue chain is MRFTEQLAAAWQRNNSLLCVGLDPDPARLPASLTGTGGAIFSFCRAIVDATADLVCAFKPQIAYFASQRAEDQLEQLISYIHEAYPGVPVILDAKRGDIGSTAEHYAKEAFERYQADAVTVSPYMGFDSMQPYLAHADKGVIVLCRTSNAGGSDVQFLETDGRPVYQVVAERARDVWNTSGQMGLVVGATFPEEIAKVREIVGDMPLLIPGVGAQGGDIEATVRAGRTADGTGMMINSSRAILYASTDSDFADAARRVALATRDQINQFRN.

The Proton donor role is filled by lysine 95.

Belongs to the OMP decarboxylase family. Type 2 subfamily.

It carries out the reaction orotidine 5'-phosphate + H(+) = UMP + CO2. The protein operates within pyrimidine metabolism; UMP biosynthesis via de novo pathway; UMP from orotate: step 2/2. This chain is Orotidine 5'-phosphate decarboxylase, found in Ralstonia pickettii (strain 12J).